Reading from the N-terminus, the 295-residue chain is 2-dehydropantoate 2-reductase (295 aa).

Residues 9–14 (GPGAVG), N100, and A126 each bind NADP(+). N100 serves as a coordination point for substrate. The active-site Proton donor is K177. Positions 181 and 246 each coordinate substrate. An NADP(+)-binding site is contributed by E258.

It belongs to the ketopantoate reductase family.

The protein resides in the cytoplasm. It catalyses the reaction (R)-pantoate + NADP(+) = 2-dehydropantoate + NADPH + H(+). It functions in the pathway cofactor biosynthesis; (R)-pantothenate biosynthesis; (R)-pantoate from 3-methyl-2-oxobutanoate: step 2/2. In terms of biological role, catalyzes the NADPH-dependent reduction of ketopantoate into pantoic acid. This chain is 2-dehydropantoate 2-reductase, found in Mycobacterium tuberculosis (strain CDC 1551 / Oshkosh).